Reading from the N-terminus, the 74-residue chain is U-scoloptoxin(09)-Sm3a (74 aa).

The first 22 residues, 1–22 (MNANSIFLCFFIMLIGCTLTHS), serve as a signal peptide directing secretion.

The protein belongs to the scoloptoxin-09 family. Post-translationally, contains 3 disulfide bonds. In terms of tissue distribution, expressed by the venom gland.

It is found in the secreted. In Scolopendra morsitans (Tanzanian blue ringleg centipede), this protein is U-scoloptoxin(09)-Sm3a.